Consider the following 300-residue polypeptide: MSEHHSGFVAIIGRPNVGKSTFMNRILGEKIAIMSPKAQTTRNKINGIYTTPDAQIVFVDTPGIHKPKNELDTYMDKAALSTLNQVDAILFMVEADEEKGPGDGYIMRQLAEVKKPVYLIINKIDLVKPDDLLPLIESYQHDYAFAQVFPISATMENNVDELLTALTDALPVGPQYYPEDQLTDHPEYFVVGELIREKILELTRDEVPHAVAVQVERMKDREGGKLQIEAYIIVERDSQKGIIIGRGGQMLKQIGIRARRDIENLLGDKVNLKLWVRVQKNWRDNNAYLKSLGYNTKDLR.

An Era-type G domain is found at 5–172 (HSGFVAIIGR…LTALTDALPV (168 aa)). The tract at residues 13–20 (GRPNVGKS) is G1. 13–20 (GRPNVGKS) provides a ligand contact to GTP. The G2 stretch occupies residues 39–43 (QTTRN). Residues 60–63 (DTPG) are G3. GTP contacts are provided by residues 60 to 64 (DTPGI) and 122 to 125 (NKID). Positions 122 to 125 (NKID) are G4. The interval 151 to 153 (ISA) is G5. The region spanning 203-280 (TRDEVPHAVA…NLKLWVRVQK (78 aa)) is the KH type-2 domain.

This sequence belongs to the TRAFAC class TrmE-Era-EngA-EngB-Septin-like GTPase superfamily. Era GTPase family. As to quaternary structure, monomer.

Its subcellular location is the cytoplasm. It is found in the cell membrane. Its function is as follows. An essential GTPase that binds both GDP and GTP, with rapid nucleotide exchange. Plays a role in 16S rRNA processing and 30S ribosomal subunit biogenesis and possibly also in cell cycle regulation and energy metabolism. The chain is GTPase Era from Lacticaseibacillus paracasei (strain ATCC 334 / BCRC 17002 / CCUG 31169 / CIP 107868 / KCTC 3260 / NRRL B-441) (Lactobacillus paracasei).